A 393-amino-acid chain; its full sequence is Golgi membrane protein 1 (393 aa).

Met1 bears the N-acetylmethionine mark. The Cytoplasmic portion of the chain corresponds to 1-12; it reads MMGLGNGRRSMK. A helical; Signal-anchor for type II membrane protein membrane pass occupies residues 13 to 35; the sequence is SPPLILAALVACVIVLGFNYWIA. The Lumenal portion of the chain corresponds to 36 to 393; the sequence is SSRSVELQTR…QVGIHIPQQA (358 aa). The stretch at 40–183 forms a coiled coil; it reads VELQTRIVEL…IEEVIRKRNE (144 aa). Residues Asn109 and Asn144 are each glycosylated (N-linked (GlcNAc...) asparagine). 2 disordered regions span residues 180–247 and 284–352; these read KRNE…QVQN and HTQL…LAGN. Phosphoserine is present on Ser187. Polar residues-rich tracts occupy residues 192–201 and 227–247; these read ETNNQHQQAL and NKSQ…QVQN. Asn227 carries an N-linked (GlcNAc...) asparagine glycan. Basic and acidic residues predominate over residues 294-320; sequence RPEEDSQYPEREQLVIRDRQEQQRASE. Residues 330 to 339 are compositionally biased toward acidic residues; the sequence is DEYDMDENEA.

Belongs to the GOLM family. In terms of assembly, interacts with DYM. Glycosylated. Post-translationally, phosphorylation sites are present in the extracellular medium.

It is found in the golgi apparatus. The protein localises to the cis-Golgi network membrane. Its function is as follows. Unknown. Cellular response protein to viral infection. The protein is Golgi membrane protein 1 (Golm1) of Mus musculus (Mouse).